The following is a 457-amino-acid chain: UDP-N-acetylmuramoyl-tripeptide--D-alanyl-D-alanine ligase (457 aa).

113–119 (GSNGKTT) serves as a coordination point for ATP.

The protein belongs to the MurCDEF family. MurF subfamily.

It localises to the cytoplasm. The enzyme catalyses D-alanyl-D-alanine + UDP-N-acetyl-alpha-D-muramoyl-L-alanyl-gamma-D-glutamyl-meso-2,6-diaminopimelate + ATP = UDP-N-acetyl-alpha-D-muramoyl-L-alanyl-gamma-D-glutamyl-meso-2,6-diaminopimeloyl-D-alanyl-D-alanine + ADP + phosphate + H(+). Its pathway is cell wall biogenesis; peptidoglycan biosynthesis. Its function is as follows. Involved in cell wall formation. Catalyzes the final step in the synthesis of UDP-N-acetylmuramoyl-pentapeptide, the precursor of murein. This is UDP-N-acetylmuramoyl-tripeptide--D-alanyl-D-alanine ligase from Bacillus subtilis (strain 168).